The sequence spans 1237 residues: Phosphorylase b kinase regulatory subunit alpha, skeletal muscle isoform (1237 aa).

A phosphoserine mark is found at Ser-629, Ser-729, Ser-735, and Ser-758. Positions 810 to 840 (LTELYGKVGKIRHWGLIRYISGILRKKVEAL) are calmodulin-binding. Residue Ser-972 is modified to Phosphoserine; by autocatalysis. Ser-981 carries the post-translational modification Phosphoserine. Ser-985 and Ser-1007 each carry phosphoserine; by autocatalysis. Residue Ser-1018 is modified to Phosphoserine; by PKA. 3 positions are modified to phosphoserine: Ser-1020, Ser-1023, and Ser-1030. Residues 1021 to 1069 (TESQPNGGHSLGADLMSPSFLSPGTSVTPSSGSFPGHHTSKDSRQGQWQ) are disordered. A compositionally biased stretch (low complexity) spans 1042 to 1056 (SPGTSVTPSSGSFPG). The segment at 1060–1100 (SKDSRQGQWQRRRRLDGALNRVPIGFYQKVWKVLQKCHGLS) is calmodulin-binding. Position 1127 is a phosphoserine (Ser-1127). Residue Cys-1234 is the site of S-farnesyl cysteine attachment.

It belongs to the phosphorylase b kinase regulatory chain family. Hexadecamer of 4 heterotetramers, each composed of alpha, beta, gamma, and delta subunits. Alpha (PHKA1 or PHKA2) and beta (PHKB) are regulatory subunits, gamma (PHKG1 or PHKG2) is the catalytic subunit, and delta is calmodulin. Post-translationally, phosphorylation of Ser-1018 by PKA stimulates the dephosphorylation of the beta subunit and, thus, reverses the initial stimulation of PHK by the faster beta-subunit phosphorylation by PKA, that occurs in muscle in response to adrenaline. Cys-1234 is farnesylated, but the C-terminal tripeptide is not removed and the cysteine carboxyl is not methylated. As to expression, isoform 1 predominates in muscle, heart, brain and testis. Isoforms 1 and 2 are expressed in similar quantities in the other tissues. Isoform 3 is highly expressed in slow muscle and heart.

Its subcellular location is the cell membrane. The protein operates within glycan biosynthesis; glycogen metabolism. By phosphorylation of various serine residues and by calcium. Its function is as follows. Phosphorylase b kinase catalyzes the phosphorylation of serine in certain substrates, including troponin I. The alpha chain may bind calmodulin. This is Phosphorylase b kinase regulatory subunit alpha, skeletal muscle isoform (PHKA1) from Oryctolagus cuniculus (Rabbit).